Here is a 510-residue protein sequence, read N- to C-terminus: Glycerol kinase (510 aa).

T13 serves as a coordination point for ADP. Positions 13 and 14 each coordinate ATP. T13 is a sn-glycerol 3-phosphate binding site. R17 lines the ADP pocket. Residues R83, E84, Y135, and D255 each coordinate sn-glycerol 3-phosphate. Residues R83, E84, Y135, D255, and Q256 each coordinate glycerol. ADP contacts are provided by T277, G321, G421, and N425. ATP is bound by residues T277, G321, and G421.

It belongs to the FGGY kinase family.

The catalysed reaction is glycerol + ATP = sn-glycerol 3-phosphate + ADP + H(+). The protein operates within polyol metabolism; glycerol degradation via glycerol kinase pathway; sn-glycerol 3-phosphate from glycerol: step 1/1. Functionally, key enzyme in the regulation of glycerol uptake and metabolism. Catalyzes the phosphorylation of glycerol to yield sn-glycerol 3-phosphate. In Halobacterium salinarum (strain ATCC 29341 / DSM 671 / R1), this protein is Glycerol kinase.